Here is a 422-residue protein sequence, read N- to C-terminus: Keratin, type II cytoskeletal 80 (422 aa).

The tract at residues 1-82 (MACRSCVVGF…DPAIQQQKNN (82 aa)) is head. Serine 45 bears the Phosphoserine mark. Positions 83–118 (EKEEMKVLNDKFASLIGKVQALEQRNQLLETRWHFL) are coil 1A. In terms of domain architecture, IF rod spans 83 to 394 (EKEEMKVLND…KLMEGEESRM (312 aa)). The tract at residues 119-135 (QSQDSATFDLGHLYEEY) is linker 1. Residues 136–227 (QGRLQEELRK…SIYEQELKDL (92 aa)) form a coil 1B region. Positions 228 to 251 (AAQLKDVSVTVGMDSRCHIDLSGI) are linker 12. A coil 2 region spans residues 252–390 (VEEVKAQYDA…ATYRKLMEGE (139 aa)). The segment at 391-422 (ESRMDMPSATVVSAVQARCRTAPTLPHPLCSL) is tail.

This sequence belongs to the intermediate filament family. In terms of assembly, heterotetramer of two type I and two type II keratins.

In Bos taurus (Bovine), this protein is Keratin, type II cytoskeletal 80 (KRT80).